The sequence spans 202 residues: Secreted RxLR effector protein 11 (202 aa).

An N-terminal signal peptide occupies residues 1–23 (MRLNFTKLFAGAVALAWTTESMA). The RxLR-dEER signature appears at 49–61 (RRLRTINGADEER).

It belongs to the RxLR effector family.

Its subcellular location is the secreted. It localises to the host cytoplasm. It is found in the host nucleus. Functionally, effector that acts as a broad suppressor of cell death to interrupt plant immunity. Inhibits cell death induced by cell death-inducing proteins, including the PAMP elicitor INF1 from P.infestans. The sequence is that of Secreted RxLR effector protein 11 from Plasmopara viticola (Downy mildew of grapevine).